A 364-amino-acid chain; its full sequence is Aminomethyltransferase (364 aa).

This sequence belongs to the GcvT family. In terms of assembly, the glycine cleavage system is composed of four proteins: P, T, L and H.

The enzyme catalyses N(6)-[(R)-S(8)-aminomethyldihydrolipoyl]-L-lysyl-[protein] + (6S)-5,6,7,8-tetrahydrofolate = N(6)-[(R)-dihydrolipoyl]-L-lysyl-[protein] + (6R)-5,10-methylene-5,6,7,8-tetrahydrofolate + NH4(+). In terms of biological role, the glycine cleavage system catalyzes the degradation of glycine. This is Aminomethyltransferase from Shewanella putrefaciens (strain CN-32 / ATCC BAA-453).